Consider the following 403-residue polypeptide: Poly(rC)-binding protein 4 (403 aa).

KH domains lie at 17-67 (TLTL…TITG), 101-154 (PVTL…TVSG), and 241-293 (TSSQ…TITG).

Widely expressed, with highest levels in testis and lowest in heart.

The protein localises to the cytoplasm. Its function is as follows. Single-stranded nucleic acid binding protein that binds preferentially to oligo dC. The chain is Poly(rC)-binding protein 4 (Pcbp4) from Mus musculus (Mouse).